A 438-amino-acid chain; its full sequence is Trigger factor (438 aa).

Positions 163–248 constitute a PPIase FKBP-type domain; sequence GEIAVLDFAA…VHAVKERKLP (86 aa).

This sequence belongs to the FKBP-type PPIase family. Tig subfamily.

The protein resides in the cytoplasm. It catalyses the reaction [protein]-peptidylproline (omega=180) = [protein]-peptidylproline (omega=0). Functionally, involved in protein export. Acts as a chaperone by maintaining the newly synthesized protein in an open conformation. Functions as a peptidyl-prolyl cis-trans isomerase. The polypeptide is Trigger factor (Oleidesulfovibrio alaskensis (strain ATCC BAA-1058 / DSM 17464 / G20) (Desulfovibrio alaskensis)).